Consider the following 224-residue polypeptide: MLSTGVKSLDELLGGGIAPEVLTQVYGSFATGKTTLAVQIGLLSGGKVAYVDTEGGFSPERLAQMAESRGLDPEEALQRFILFTPADFKEQRRTIGSLKKIVDKSFSLIVVDSITAHYRVEEQRKNLTAELGKQLQVLLWLARKLGIPVIVINQVHFDSRAERMKPVAEHTLGYRCKDILRLDKLNTPGLRVALLERHRFRPEGGMVYFRITEKGIEDVLGREE.

It belongs to the eukaryotic RecA-like protein family. RadB subfamily.

Functionally, involved in DNA repair and in homologous recombination. May regulate the cleavage reactions of the branch-structured DNA. Has a very weak ATPase activity that is not stimulated by DNA. Binds DNA but does not promote DNA strands exchange. This Thermococcus onnurineus (strain NA1) protein is DNA repair and recombination protein RadB.